The following is a 193-amino-acid chain: dCTP deaminase (193 aa).

Residues 110–115 (RSSLAR), D128, 136–138 (VLE), Y171, K178, and Q182 each bind dCTP. The Proton donor/acceptor role is filled by E138. The interval 169-193 (RPYNSRQDAKYRDQQGAVASRIDKD) is disordered.

Belongs to the dCTP deaminase family. As to quaternary structure, homotrimer.

It carries out the reaction dCTP + H2O + H(+) = dUTP + NH4(+). It participates in pyrimidine metabolism; dUMP biosynthesis; dUMP from dCTP (dUTP route): step 1/2. In terms of biological role, catalyzes the deamination of dCTP to dUTP. This chain is dCTP deaminase, found in Serratia proteamaculans (strain 568).